Here is a 120-residue protein sequence, read N- to C-terminus: Large ribosomal subunit protein uL18 (120 aa).

This sequence belongs to the universal ribosomal protein uL18 family. Part of the 50S ribosomal subunit; part of the 5S rRNA/L5/L18/L25 subcomplex. Contacts the 5S and 23S rRNAs.

In terms of biological role, this is one of the proteins that bind and probably mediate the attachment of the 5S RNA into the large ribosomal subunit, where it forms part of the central protuberance. The sequence is that of Large ribosomal subunit protein uL18 from Staphylococcus epidermidis (strain ATCC 35984 / DSM 28319 / BCRC 17069 / CCUG 31568 / BM 3577 / RP62A).